We begin with the raw amino-acid sequence, 85 residues long: uncharacterized protein (85 aa).

The segment at 35–85 (SDKDAPFSTQALTRSKSKRKRSALPVANGLKKPTRSIKRPSRGERLSATTI) is disordered.

This is an uncharacterized protein from Pasteurella multocida (strain Pm70).